Reading from the N-terminus, the 336-residue chain is Zinc transporter ZIP11 (336 aa).

The next 7 helical transmembrane spans lie at 12-32, 44-64, 75-95, 188-208, 258-278, 280-300, and 316-336; these read LLGT…VFIF, LGFA…APAI, SFAF…VYLA, IMLL…AVGV, WYGQ…TIAI, LAEP…VYVV, and LASW…VGLG.

The protein belongs to the ZIP transporter (TC 2.A.5) family.

The protein resides in the cell membrane. It is found in the nucleus. It localises to the cytoplasm. Its subcellular location is the golgi apparatus. In terms of biological role, functions as a cellular zinc transporter. The protein is Zinc transporter ZIP11 (slc39a11) of Xenopus tropicalis (Western clawed frog).